Here is a 578-residue protein sequence, read N- to C-terminus: MIRLNWLFRSSSVLLRSQVRLLHVGDANVLHSEVDKQSAEYKENAREMASLVGDLRNFTSQVLKGGGQKAIERHTSRGKLLARERINLLLDKGSPFLELSALAGHELYGEEVVNSGGIVTGVGRVCGTECLVVANDATVKGGSYYPITVKKHLRAQEIAQENRLPCIYLVDSGGANLPRQADVFPDKLHFGRIFYNQANMSAQGIPQIAVVMGSCTAGGAYVPAMADESIIVKKQGTIFLAGPPLVKAATGEEVSAEDLGGADLHCKTSGVTDHYALDDEHALYLARQIVSNLNLSATNSYNDQLMHSSQVNFQTATPPSAVEEPRYDAEELYGIVGPNLTKSFDVREVIARIVDGSRFTEFKKLYGETLVCGFAKLYGHTVGIVGNNGVLFSESALKGAHFIQLCAQRKIPLVFLQNITGFMVGRDAEANGIAKNGAKMVTAVACANVPKFTVIIGGSYGAGNYGMCGRAYSPRFLYMWPNSRISVMGGTQAANVMAQITEDQRKRAGKEFSEEEAQKLKAPIVEMFEAEGSPYYSTARLWDDGIIDPANTRQILGLSLKAALNNAGQETKFGVFRM.

Residues 1–29 constitute a mitochondrion transit peptide; the sequence is MIRLNWLFRSSSVLLRSQVRLLHVGDANV. The 258-residue stretch at 48–305 folds into the CoA carboxyltransferase N-terminal domain; it reads MASLVGDLRN…SATNSYNDQL (258 aa). The interval 48–570 is carboxyltransferase; sequence MASLVGDLRN…KAALNNAGQE (523 aa). Positions 321–570 constitute a CoA carboxyltransferase C-terminal domain; the sequence is AVEEPRYDAE…KAALNNAGQE (250 aa). The acyl-CoA binding stretch occupies residues 355-388; that stretch reads DGSRFTEFKKLYGETLVCGFAKLYGHTVGIVGNN.

The protein belongs to the AccD/PCCB family. Expressed in third instar larval ring gland (lateral and medial secretory cells and corpus cardiacum cells) and CNS.

It localises to the mitochondrion matrix. It carries out the reaction 3-methylbut-2-enoyl-CoA + hydrogencarbonate + ATP = 3-methyl-(2E)-glutaconyl-CoA + ADP + phosphate + H(+). The protein operates within amino-acid degradation; L-leucine degradation; (S)-3-hydroxy-3-methylglutaryl-CoA from 3-isovaleryl-CoA: step 2/3. Functionally, carboxyltransferase subunit of the 3-methylcrotonyl-CoA carboxylase, an enzyme that catalyzes the conversion of 3-methylcrotonyl-CoA to 3-methylglutaconyl-CoA, a critical step for leucine and isovaleric acid catabolism. Vital for adult survival. This Drosophila melanogaster (Fruit fly) protein is Probable methylcrotonoyl-CoA carboxylase beta chain, mitochondrial.